Reading from the N-terminus, the 407-residue chain is Schlafen-like protein 1 (407 aa).

2 disordered regions span residues 1–28 (MTPM…LPEL) and 137–191 (AQGP…CQGR). Low complexity predominate over residues 155 to 167 (GLSPGPSPGSGVP). The segment covering 181-190 (QAQQLQSCQG) has biased composition (polar residues). An ATP-binding site is contributed by 261–268 (GVEDSGLV). A coiled-coil region spans residues 366 to 398 (RQRWLVELGKLEEKMKALMMEKEQLQQQLQQHG).

Belongs to the Schlafen family. Subgroup I subfamily.

The sequence is that of Schlafen-like protein 1 (SLFNL1) from Homo sapiens (Human).